Consider the following 345-residue polypeptide: Serine proteinase inhibitor 2 (345 aa).

The protein belongs to the serpin family. Poxviruses subfamily.

Its subcellular location is the host cytoplasm. In terms of biological role, viral serpin that inhibits both cysteine and serine proteinases involved in the regulation of host inflammatory and apoptosis processes. Major anti-apoptotic protein which inhibits both intrinsic and extrinsic pathways and strongly cleaves host CASP1 and CASP8 but is a rather poor inhibitor of host CASP3. Prevents the proteolytic activity of host interleukin-1-beta converting enzyme (ICE) and ICE-like enzymes. Can also block apoptosis through host tumor necrosis factor (TNF) receptor. The inhibition of host ICE is an example of a 'cross-class' interaction, in which a serpin inhibits a non-serine proteinase. Also inhibits granzyme B. The protein is Serine proteinase inhibitor 2 (OPG199) of Vaccinia virus (strain Western Reserve) (VACV).